Here is an 856-residue protein sequence, read N- to C-terminus: Mechanosensitive ion channel protein 6 (856 aa).

2 disordered regions span residues 45–86 (GEGN…DPPT) and 116–226 (RGLT…PFAA). Basic and acidic residues-rich tracts occupy residues 70-85 (QQKD…EDPP) and 129-140 (TKRDPVGRRDSR). Positions 155-168 (SGNNAPIQRSSSTL) are enriched in polar residues. A Phosphoserine modification is found at S211. Residues 217–226 (EEEEDDPFAA) are compositionally biased toward acidic residues. 4 helical membrane-spanning segments follow: residues 242 to 262 (IVLE…TLAI), 283 to 303 (LVLI…VFFI), 323 to 343 (AVQN…LFDE), and 360 to 380 (IFVC…LVKV). S462 is subject to Phosphoserine. The next 2 membrane-spanning stretches (helical) occupy residues 615-635 (MVNI…LGIT) and 651-671 (AFIF…LFVI).

It belongs to the MscS (TC 1.A.23) family.

It localises to the membrane. Its function is as follows. Mechanosensitive channel that opens in response to stretch forces in the membrane lipid bilayer. This chain is Mechanosensitive ion channel protein 6 (MSL6), found in Arabidopsis thaliana (Mouse-ear cress).